The chain runs to 256 residues: Alcohol dehydrogenase (256 aa).

12–35 lines the NAD(+) pocket; that stretch reads FVAGLGGIGLDTSKELLKRDLKNL. Residue Ser-140 participates in substrate binding. Tyr-153 acts as the Proton acceptor in catalysis.

The protein belongs to the short-chain dehydrogenases/reductases (SDR) family. As to quaternary structure, homodimer.

The catalysed reaction is a primary alcohol + NAD(+) = an aldehyde + NADH + H(+). The enzyme catalyses a secondary alcohol + NAD(+) = a ketone + NADH + H(+). This is Alcohol dehydrogenase (Adh) from Drosophila sechellia (Fruit fly).